Reading from the N-terminus, the 215-residue chain is Cytochrome b6 (215 aa).

The helical transmembrane segment at 32–52 (IFYCLGGITLTCFLVQVATGF) threads the bilayer. Cys35 contributes to the heme c binding site. The heme b site is built by His86 and His100. 3 helical membrane-spanning segments follow: residues 90–110 (ASMM…TGGF), 116–136 (LTWV…VTGY), and 186–206 (LHTF…FPMI). 2 residues coordinate heme b: His187 and His202.

Belongs to the cytochrome b family. PetB subfamily. As to quaternary structure, the 4 large subunits of the cytochrome b6-f complex are cytochrome b6, subunit IV (17 kDa polypeptide, PetD), cytochrome f and the Rieske protein, while the 4 small subunits are PetG, PetL, PetM and PetN. The complex functions as a dimer. The cofactor is heme b. Heme c serves as cofactor.

Its subcellular location is the plastid. It localises to the chloroplast thylakoid membrane. In terms of biological role, component of the cytochrome b6-f complex, which mediates electron transfer between photosystem II (PSII) and photosystem I (PSI), cyclic electron flow around PSI, and state transitions. This Nicotiana tomentosiformis (Tobacco) protein is Cytochrome b6.